Reading from the N-terminus, the 414-residue chain is Heterogeneous nuclear ribonucleoprotein F (414 aa).

Met1 is subject to N-acetylmethionine. Met2 is subject to N-acetylmethionine; in Heterogeneous nuclear ribonucleoprotein F, N-terminally processed. The region spanning Phe11 to Arg90 is the RRM 1 domain. Residue Lys72 forms a Glycyl lysine isopeptide (Lys-Gly) (interchain with G-Cter in SUMO) linkage. The interaction with RNA stretch occupies residues Arg81–Phe86. Lys87 participates in a covalent cross-link: Glycyl lysine isopeptide (Lys-Gly) (interchain with G-Cter in SUMO2). 2 positions are modified to phosphoserine: Ser104 and Ser161. Residues Gly111–Gln188 form the RRM 2 domain. Residue Lys167 forms a Glycyl lysine isopeptide (Lys-Gly) (interchain with G-Cter in SUMO2) linkage. Residues Arg179–Phe184 form an interaction with RNA region. Residue Lys185 forms a Glycyl lysine isopeptide (Lys-Gly) (interchain with G-Cter in SUMO2) linkage. Residues Ser187, Ser193, and Ser195 each carry the phosphoserine modification. Lys200 carries the N6-acetyllysine; alternate modification. Residue Lys200 forms a Glycyl lysine isopeptide (Lys-Gly) (interchain with G-Cter in SUMO2); alternate linkage. Thr215 carries the phosphothreonine modification. N6-acetyllysine; alternate is present on Lys224. A Glycyl lysine isopeptide (Lys-Gly) (interchain with G-Cter in SUMO2); alternate cross-link involves residue Lys224. Ser265 carries the phosphoserine modification. Residues His289–Gly366 form the RRM 3 domain. The segment at Arg355 to Phe360 is interaction with RNA.

As to quaternary structure, identified in the spliceosome C complex. Interacts with AGO1, AGO2, TBP and TXNL4/DIM1. Post-translationally, sumoylated.

The protein localises to the nucleus. Its subcellular location is the nucleoplasm. In terms of biological role, component of the heterogeneous nuclear ribonucleoprotein (hnRNP) complexes which provide the substrate for the processing events that pre-mRNAs undergo before becoming functional, translatable mRNAs in the cytoplasm. Plays a role in the regulation of alternative splicing events. Binds G-rich sequences in pre-mRNAs and keeps target RNA in an unfolded state. The sequence is that of Heterogeneous nuclear ribonucleoprotein F (HNRNPF) from Bos taurus (Bovine).